Here is a 114-residue protein sequence, read N- to C-terminus: uncharacterized protein (114 aa).

Positions 1-19 (MKASYLVLIFISIFSMAQA) are cleaved as a signal peptide. Serine 41 carries the phosphoserine modification.

This sequence belongs to the protease inhibitor I9 family.

This is an uncharacterized protein from Saccharomyces cerevisiae (strain ATCC 204508 / S288c) (Baker's yeast).